A 566-amino-acid polypeptide reads, in one-letter code: DNA ligase B (566 aa).

K125 (N6-AMP-lysine intermediate) is an active-site residue.

This sequence belongs to the NAD-dependent DNA ligase family. LigB subfamily.

It catalyses the reaction NAD(+) + (deoxyribonucleotide)n-3'-hydroxyl + 5'-phospho-(deoxyribonucleotide)m = (deoxyribonucleotide)n+m + AMP + beta-nicotinamide D-nucleotide.. In terms of biological role, catalyzes the formation of phosphodiester linkages between 5'-phosphoryl and 3'-hydroxyl groups in double-stranded DNA using NAD as a coenzyme and as the energy source for the reaction. The chain is DNA ligase B from Pseudomonas putida (strain ATCC 47054 / DSM 6125 / CFBP 8728 / NCIMB 11950 / KT2440).